The sequence spans 465 residues: Siroheme synthase (465 aa).

Positions 1-203 are precorrin-2 dehydrogenase /sirohydrochlorin ferrochelatase; that stretch reads MDFLPLFHSL…GRPAEAERLL (203 aa). NAD(+)-binding positions include 22–23 and 43–44; these read EV and PQ. The residue at position 128 (serine 128) is a Phosphoserine. The uroporphyrinogen-III C-methyltransferase stretch occupies residues 217–465; sequence GEVYLVGAGP…AWFEGAREDA (249 aa). Proline 226 is an S-adenosyl-L-methionine binding site. Aspartate 249 functions as the Proton acceptor in the catalytic mechanism. The active-site Proton donor is lysine 271. Residues 302–304, isoleucine 307, 332–333, methionine 384, and glycine 413 each bind S-adenosyl-L-methionine; these read GGD and TA.

This sequence in the N-terminal section; belongs to the precorrin-2 dehydrogenase / sirohydrochlorin ferrochelatase family. The protein in the C-terminal section; belongs to the precorrin methyltransferase family.

It carries out the reaction uroporphyrinogen III + 2 S-adenosyl-L-methionine = precorrin-2 + 2 S-adenosyl-L-homocysteine + H(+). It catalyses the reaction precorrin-2 + NAD(+) = sirohydrochlorin + NADH + 2 H(+). The enzyme catalyses siroheme + 2 H(+) = sirohydrochlorin + Fe(2+). Its pathway is cofactor biosynthesis; adenosylcobalamin biosynthesis; precorrin-2 from uroporphyrinogen III: step 1/1. It participates in cofactor biosynthesis; adenosylcobalamin biosynthesis; sirohydrochlorin from precorrin-2: step 1/1. It functions in the pathway porphyrin-containing compound metabolism; siroheme biosynthesis; precorrin-2 from uroporphyrinogen III: step 1/1. The protein operates within porphyrin-containing compound metabolism; siroheme biosynthesis; siroheme from sirohydrochlorin: step 1/1. Its pathway is porphyrin-containing compound metabolism; siroheme biosynthesis; sirohydrochlorin from precorrin-2: step 1/1. Functionally, multifunctional enzyme that catalyzes the SAM-dependent methylations of uroporphyrinogen III at position C-2 and C-7 to form precorrin-2 via precorrin-1. Then it catalyzes the NAD-dependent ring dehydrogenation of precorrin-2 to yield sirohydrochlorin. Finally, it catalyzes the ferrochelation of sirohydrochlorin to yield siroheme. The chain is Siroheme synthase from Pseudomonas aeruginosa (strain LESB58).